The chain runs to 249 residues: Pyridoxine 5'-phosphate synthase (249 aa).

N12 serves as a coordination point for 3-amino-2-oxopropyl phosphate. Residue 14–15 (DH) participates in 1-deoxy-D-xylulose 5-phosphate binding. R23 is a 3-amino-2-oxopropyl phosphate binding site. H48 serves as the catalytic Proton acceptor. Residues R50 and H55 each contribute to the 1-deoxy-D-xylulose 5-phosphate site. Catalysis depends on E75, which acts as the Proton acceptor. A 1-deoxy-D-xylulose 5-phosphate-binding site is contributed by T105. H199 serves as the catalytic Proton donor. Residues G200 and 221 to 222 (GH) contribute to the 3-amino-2-oxopropyl phosphate site.

The protein belongs to the PNP synthase family. In terms of assembly, homooctamer; tetramer of dimers.

The protein localises to the cytoplasm. The catalysed reaction is 3-amino-2-oxopropyl phosphate + 1-deoxy-D-xylulose 5-phosphate = pyridoxine 5'-phosphate + phosphate + 2 H2O + H(+). It participates in cofactor biosynthesis; pyridoxine 5'-phosphate biosynthesis; pyridoxine 5'-phosphate from D-erythrose 4-phosphate: step 5/5. Its function is as follows. Catalyzes the complicated ring closure reaction between the two acyclic compounds 1-deoxy-D-xylulose-5-phosphate (DXP) and 3-amino-2-oxopropyl phosphate (1-amino-acetone-3-phosphate or AAP) to form pyridoxine 5'-phosphate (PNP) and inorganic phosphate. The polypeptide is Pyridoxine 5'-phosphate synthase (Roseobacter denitrificans (strain ATCC 33942 / OCh 114) (Erythrobacter sp. (strain OCh 114))).